The sequence spans 397 residues: Ribosomal RNA large subunit methyltransferase I (397 aa).

A PUA domain is found at 2–80; that stretch reads SAAIYLVKGR…QDINRAFFVK (79 aa).

The protein belongs to the methyltransferase superfamily. RlmI family.

Its subcellular location is the cytoplasm. The catalysed reaction is cytidine(1962) in 23S rRNA + S-adenosyl-L-methionine = 5-methylcytidine(1962) in 23S rRNA + S-adenosyl-L-homocysteine + H(+). In terms of biological role, specifically methylates the cytosine at position 1962 (m5C1962) of 23S rRNA. This Vibrio vulnificus (strain CMCP6) protein is Ribosomal RNA large subunit methyltransferase I.